A 201-amino-acid polypeptide reads, in one-letter code: MSRYRGPRFKKIRRLGALPGLTNKKPRTGSDLRNQSRSGKKSQYRIRLEEKQKLRFHYGLTERQLLKYVRIARKAKGSTGQVLLQLLEMRLDNILFRLGMASTIPAARQLVNHRHILVNGRIVDIPSYRCKPRDIITAKDEQKSRALIQISLDSSPHEELPNHLTLHPFQYKGLVNQIIDSKWVGLKINELLVVEYYSRQT.

Residues 17–44 (ALPGLTNKKPRTGSDLRNQSRSGKKSQY) form a disordered region. In terms of domain architecture, S4 RNA-binding spans 89–149 (MRLDNILFRL…DEQKSRALIQ (61 aa)).

It belongs to the universal ribosomal protein uS4 family. As to quaternary structure, part of the 30S ribosomal subunit. Contacts protein S5. The interaction surface between S4 and S5 is involved in control of translational fidelity.

The protein resides in the plastid. The protein localises to the chloroplast. In terms of biological role, one of the primary rRNA binding proteins, it binds directly to 16S rRNA where it nucleates assembly of the body of the 30S subunit. Its function is as follows. With S5 and S12 plays an important role in translational accuracy. The chain is Small ribosomal subunit protein uS4c (rps4) from Atropa belladonna (Belladonna).